The sequence spans 89 residues: Large ribosomal subunit protein bL27 (89 aa).

A disordered region spans residues 1–22; it reads MAHKKAGGSSRNGRDSESKRLG.

It belongs to the bacterial ribosomal protein bL27 family.

The sequence is that of Large ribosomal subunit protein bL27 from Rhizobium etli (strain CIAT 652).